An 86-amino-acid chain; its full sequence is Small ribosomal subunit protein uS17 (86 aa).

This sequence belongs to the universal ribosomal protein uS17 family. In terms of assembly, part of the 30S ribosomal subunit.

In terms of biological role, one of the primary rRNA binding proteins, it binds specifically to the 5'-end of 16S ribosomal RNA. This chain is Small ribosomal subunit protein uS17, found in Nitrosococcus oceani (strain ATCC 19707 / BCRC 17464 / JCM 30415 / NCIMB 11848 / C-107).